The following is a 474-amino-acid chain: GTPase Der (474 aa).

EngA-type G domains follow at residues 2–166 and 212–385; these read LRIA…NVPE and LKIA…TTVS. GTP contacts are provided by residues 8–15, 55–59, 118–121, 218–225, 265–269, and 330–333; these read GRPNVGKS, DTGGV, NKAD, DTAGL, and NKWD. The region spanning 386–470 is the KH-like domain; the sequence is SKVPTPVVNK…PFDLEFKEKT (85 aa).

The protein belongs to the TRAFAC class TrmE-Era-EngA-EngB-Septin-like GTPase superfamily. EngA (Der) GTPase family. In terms of assembly, associates with the 50S ribosomal subunit.

Functionally, GTPase that plays an essential role in the late steps of ribosome biogenesis. The protein is GTPase Der of Chlamydia abortus (strain DSM 27085 / S26/3) (Chlamydophila abortus).